A 66-amino-acid polypeptide reads, in one-letter code: DNA-directed RNA polymerase subunit Rpo10 (66 aa).

Residues Cys7, Cys10, Cys44, and Cys45 each contribute to the Zn(2+) site.

Belongs to the archaeal Rpo10/eukaryotic RPB10 RNA polymerase subunit family. Part of the RNA polymerase complex. Zn(2+) is required as a cofactor.

The protein resides in the cytoplasm. The catalysed reaction is RNA(n) + a ribonucleoside 5'-triphosphate = RNA(n+1) + diphosphate. In terms of biological role, DNA-dependent RNA polymerase (RNAP) catalyzes the transcription of DNA into RNA using the four ribonucleoside triphosphates as substrates. This Staphylothermus marinus (strain ATCC 43588 / DSM 3639 / JCM 9404 / F1) protein is DNA-directed RNA polymerase subunit Rpo10.